Consider the following 153-residue polypeptide: Zinc finger protein GIS2 (153 aa).

CCHC-type zinc fingers lie at residues 4 to 21 (KACY…DCDS), 23 to 40 (RLCY…DCTM), 47 to 64 (KQCY…ECTV), 65 to 82 (QRCF…ECPE), 92 to 109 (VSCY…DCMK), 116 to 133 (LKCY…DCQN), and 135 to 152 (RLCY…DCPK).

It localises to the cytoplasm. In terms of biological role, may act in the sexual differentiation pathway. This is Zinc finger protein GIS2 (GIS2) from Saccharomyces cerevisiae (strain ATCC 204508 / S288c) (Baker's yeast).